Here is a 498-residue protein sequence, read N- to C-terminus: ATP synthase subunit beta, chloroplastic (498 aa).

172 to 179 (GGAGVGKT) is an ATP binding site.

The protein belongs to the ATPase alpha/beta chains family. F-type ATPases have 2 components, CF(1) - the catalytic core - and CF(0) - the membrane proton channel. CF(1) has five subunits: alpha(3), beta(3), gamma(1), delta(1), epsilon(1). CF(0) has four main subunits: a(1), b(1), b'(1) and c(9-12).

The protein resides in the plastid. Its subcellular location is the chloroplast thylakoid membrane. The catalysed reaction is ATP + H2O + 4 H(+)(in) = ADP + phosphate + 5 H(+)(out). In terms of biological role, produces ATP from ADP in the presence of a proton gradient across the membrane. The catalytic sites are hosted primarily by the beta subunits. The chain is ATP synthase subunit beta, chloroplastic from Nicotiana sylvestris (Wood tobacco).